Consider the following 127-residue polypeptide: Large ribosomal subunit protein bL20 (127 aa).

The protein belongs to the bacterial ribosomal protein bL20 family.

Binds directly to 23S ribosomal RNA and is necessary for the in vitro assembly process of the 50S ribosomal subunit. It is not involved in the protein synthesizing functions of that subunit. The sequence is that of Large ribosomal subunit protein bL20 from Streptomyces avermitilis (strain ATCC 31267 / DSM 46492 / JCM 5070 / NBRC 14893 / NCIMB 12804 / NRRL 8165 / MA-4680).